We begin with the raw amino-acid sequence, 126 residues long: Protein K7 (126 aa).

Residues 24 to 44 (LPLHLWILCSLLAFLPLLVFI) traverse the membrane as a helical segment.

Interacts with host CAMLG; this interaction allows efficient apoptosis inhibition. Additionally, interacts with vGPCR/ORF74 and induces its proteasomeal degradation.

It is found in the host membrane. The protein resides in the host mitochondrion. Functionally, plays a role in the inhibition of host apoptosis to allow completion of the viral lytic replication and may thus favor the maintenance of persistent infection in infected host. This is Protein K7 (K7) from Homo sapiens (Human).